Reading from the N-terminus, the 166-residue chain is uncharacterized protein (166 aa).

This is an uncharacterized protein from Schizosaccharomyces pombe (strain 972 / ATCC 24843) (Fission yeast).